A 433-amino-acid chain; its full sequence is C2H2 type master regulator of conidiophore development brlA (433 aa).

Disordered regions lie at residues 23 to 64 (PSEC…SHYH) and 240 to 265 (KTHT…PVSR). The segment covering 30–48 (TSSFSPLDSPTPTPTSLYS) has biased composition (low complexity). Residues 240 to 264 (KTHTPSTPHRSVSMGTPSGSDTPVS) are compositionally biased toward polar residues. 2 consecutive C2H2-type zinc fingers follow at residues 321–345 (FKCK…MKSH) and 351–376 (HVCW…TKTH). The segment at 391–416 (ETSQDFDPDFRGQLTPDGRPIYGSKL) is disordered.

The protein localises to the nucleus. BrlA, abaA and wetA are pivotal regulators of conidiophore development and conidium maturation. They act individually and together to regulate their own expression and that of numerous other sporulation-specific genes. Binds promoters of target genes at brlA response elements (BREs) containing the conserved sequence 5'-(C/A)(A/G)AGGG(G/A)-3'. Is not required for penicillin V production. The polypeptide is C2H2 type master regulator of conidiophore development brlA (Penicillium rubens (strain ATCC 28089 / DSM 1075 / NRRL 1951 / Wisconsin 54-1255) (Penicillium chrysogenum)).